A 318-amino-acid polypeptide reads, in one-letter code: MNRFTRYDVTPEAIFNQRRQIIKAMGLGAAALSLPNIGFAAEKSDQLKALNFKDAPKGDFLLTPENKVTGYNNFYEFGVDKASPAKFAKDFKTDPWSLEIAGEVENPFVLNHAQLFNTFPLEERIYRFRCVEAWSMVIPWVGFELARLVEMAKPTSKAKFVIFHTLHDPEQMPGQKNKFFGGGIDYPYVEALTIEEAMNPLTLLSVGLYGKMLPPQNGAPIRLVVPWKYGFKSIKSIVKITFSETRPRTTWEKLAPHEYGFYANVNPNVDHPRWSQASERVIGSGGLLAVKRQDTLMFNGYEKEVAHLYKGLDLKVNF.

Residues 1 to 40 (MNRFTRYDVTPEAIFNQRRQIIKAMGLGAAALSLPNIGFA) constitute a signal peptide (tat-type signal). Residues N72, 75-76 (YE), C130, T165, N217, R222, and 233-235 (SIK) contribute to the Mo-molybdopterin site.

It belongs to the MsrP family. As to quaternary structure, heterodimer of a catalytic subunit (MsrP) and a heme-binding subunit (MsrQ). It depends on Mo-molybdopterin as a cofactor. Predicted to be exported by the Tat system. The position of the signal peptide cleavage has not been experimentally proven.

The protein localises to the periplasm. The catalysed reaction is L-methionyl-[protein] + a quinone + H2O = L-methionyl-(S)-S-oxide-[protein] + a quinol. The enzyme catalyses L-methionyl-[protein] + a quinone + H2O = L-methionyl-(R)-S-oxide-[protein] + a quinol. In terms of biological role, part of the MsrPQ system that repairs oxidized periplasmic proteins containing methionine sulfoxide residues (Met-O), using respiratory chain electrons. Thus protects these proteins from oxidative-stress damage caused by reactive species of oxygen and chlorine generated by the host defense mechanisms. MsrPQ is essential for the maintenance of envelope integrity under bleach stress, rescuing a wide series of structurally unrelated periplasmic proteins from methionine oxidation. The catalytic subunit MsrP is non-stereospecific, being able to reduce both (R-) and (S-) diastereoisomers of methionine sulfoxide. This chain is Protein-methionine-sulfoxide reductase catalytic subunit MsrP, found in Actinobacillus pleuropneumoniae serotype 5b (strain L20).